The primary structure comprises 607 residues: Glutamine--fructose-6-phosphate aminotransferase [isomerizing] (607 aa).

The active-site Nucleophile; for GATase activity is cysteine 2. The Glutamine amidotransferase type-2 domain maps to 2–218; it reads CGIIGYSGSK…DGDVVLVTKD (217 aa). 2 SIS domains span residues 280-424 and 457-597; these read FDEQ…KLGK and IAKK…VDKP. The active-site For Fru-6P isomerization activity is the lysine 602.

In terms of assembly, homodimer.

It is found in the cytoplasm. It carries out the reaction D-fructose 6-phosphate + L-glutamine = D-glucosamine 6-phosphate + L-glutamate. In terms of biological role, catalyzes the first step in hexosamine metabolism, converting fructose-6P into glucosamine-6P using glutamine as a nitrogen source. This is Glutamine--fructose-6-phosphate aminotransferase [isomerizing] from Fusobacterium nucleatum subsp. nucleatum (strain ATCC 25586 / DSM 15643 / BCRC 10681 / CIP 101130 / JCM 8532 / KCTC 2640 / LMG 13131 / VPI 4355).